Here is a 330-residue protein sequence, read N- to C-terminus: Polyprenyl transferase ausN (330 aa).

5 helical membrane-spanning segments follow: residues 116-136 (AATI…LFLP), 165-185 (LILI…GMEP), 189-209 (ILSM…IDLV), 238-258 (AYSL…LGGL), and 260-280 (VPFV…FLRA).

Belongs to the UbiA prenyltransferase family. The cofactor is Mg(2+).

It is found in the membrane. It catalyses the reaction 3,5-dimethylorsellinate + (2E,6E)-farnesyl diphosphate = (3R)-3-farnesyl-6-hydroxy-2,3,5-trimethyl-4-oxocyclohexa-1,5-diene-1-carboxylate + diphosphate + H(+). It functions in the pathway secondary metabolite biosynthesis; terpenoid biosynthesis. Its function is as follows. Polyprenyl transferase; part of the gene cluster B that mediates the biosynthesis of austinol and dehydroaustinol, two fungal meroterpenoids. The first step of the pathway is the synthesis of 3,5-dimethylorsellinic acid by the polyketide synthase ausA. 3,5-dimethylorsellinic acid is then prenylated by the polyprenyl transferase ausN. Further epoxidation by the FAD-dependent monooxygenase ausM and cyclization by the probable terpene cyclase ausL lead to the formation of protoaustinoid A. Protoaustinoid A is then oxidized to spiro-lactone preaustinoid A3 by the combined action of the FAD-binding monooxygenases ausB and ausC, and the dioxygenase ausE. Acid-catalyzed keto-rearrangement and ring contraction of the tetraketide portion of preaustinoid A3 by ausJ lead to the formation of preaustinoid A4. The aldo-keto reductase ausK, with the help of ausH, is involved in the next step by transforming preaustinoid A4 into isoaustinone which is in turn hydroxylated by the P450 monooxygenase ausI to form austinolide. Finally, the cytochrome P450 monooxygenase ausG modifies austinolide to austinol. Austinol can be further modified to dehydroaustinol which forms a diffusible complex with diorcinol that initiates conidiation. Due to genetic rearrangements of the clusters and the subsequent loss of some enzymes, the end products of the Emericella nidulans austinoid biosynthesis clusters are austinol and dehydroaustinol, even if additional enzymes, such as the O-acetyltransferase ausQ and the cytochrome P450 monooxygenase ausR are still functional. In Emericella nidulans (strain FGSC A4 / ATCC 38163 / CBS 112.46 / NRRL 194 / M139) (Aspergillus nidulans), this protein is Polyprenyl transferase ausN.